The chain runs to 484 residues: Glutamyl-tRNA(Gln) amidotransferase subunit A (484 aa).

Catalysis depends on charge relay system residues Lys74 and Ser149. The active-site Acyl-ester intermediate is the Ser173.

This sequence belongs to the amidase family. GatA subfamily. Heterotrimer of A, B and C subunits.

The catalysed reaction is L-glutamyl-tRNA(Gln) + L-glutamine + ATP + H2O = L-glutaminyl-tRNA(Gln) + L-glutamate + ADP + phosphate + H(+). Allows the formation of correctly charged Gln-tRNA(Gln) through the transamidation of misacylated Glu-tRNA(Gln) in organisms which lack glutaminyl-tRNA synthetase. The reaction takes place in the presence of glutamine and ATP through an activated gamma-phospho-Glu-tRNA(Gln). This chain is Glutamyl-tRNA(Gln) amidotransferase subunit A, found in Prochlorococcus marinus subsp. pastoris (strain CCMP1986 / NIES-2087 / MED4).